We begin with the raw amino-acid sequence, 106 residues long: Small ribosomal subunit protein uS10 (106 aa).

Belongs to the universal ribosomal protein uS10 family. In terms of assembly, part of the 30S ribosomal subunit.

Involved in the binding of tRNA to the ribosomes. In Synechococcus sp. (strain RCC307), this protein is Small ribosomal subunit protein uS10.